Reading from the N-terminus, the 390-residue chain is Deoxyhypusine synthase-like protein (390 aa).

Belongs to the deoxyhypusine synthase family.

This Nostoc punctiforme (strain ATCC 29133 / PCC 73102) protein is Deoxyhypusine synthase-like protein.